A 236-amino-acid chain; its full sequence is 2-C-methyl-D-erythritol 4-phosphate cytidylyltransferase (236 aa).

This sequence belongs to the IspD/TarI cytidylyltransferase family. IspD subfamily. In terms of assembly, homodimer.

It carries out the reaction 2-C-methyl-D-erythritol 4-phosphate + CTP + H(+) = 4-CDP-2-C-methyl-D-erythritol + diphosphate. The protein operates within isoprenoid biosynthesis; isopentenyl diphosphate biosynthesis via DXP pathway; isopentenyl diphosphate from 1-deoxy-D-xylulose 5-phosphate: step 2/6. Catalyzes the formation of 4-diphosphocytidyl-2-C-methyl-D-erythritol from CTP and 2-C-methyl-D-erythritol 4-phosphate (MEP). The sequence is that of 2-C-methyl-D-erythritol 4-phosphate cytidylyltransferase from Salmonella heidelberg (strain SL476).